Here is a 284-residue protein sequence, read N- to C-terminus: MTKPDLASLEKTIEKAFDERDGINTATRGEVREAVEQSLILLDRGEVRVAEKQADGNWHVNQWLKKAVLLSFRLNPMEVIKGGPGQSSWWDKVPSKFDGWTANEFEKAGFRAVPSCIVRHSAYIAPNAILMPSFVNLGAYVDKGAMIDTWATVGSCAQIGKNVHLSGGVGIGGVLEPMQAGPTIIEDNCFIGARSEVVEGCIVREGSVLGMGVFIGKSTKIVDRATGEVFYGEVPPYSVVVAGTMPGKNVPGENWGPSLYCAVIVKRADEKTRSKTSINELLRD.

Residues Arg111 and Asp148 each coordinate substrate.

It belongs to the transferase hexapeptide repeat family. Homotrimer.

It is found in the cytoplasm. It carries out the reaction (S)-2,3,4,5-tetrahydrodipicolinate + succinyl-CoA + H2O = (S)-2-succinylamino-6-oxoheptanedioate + CoA. Its pathway is amino-acid biosynthesis; L-lysine biosynthesis via DAP pathway; LL-2,6-diaminopimelate from (S)-tetrahydrodipicolinate (succinylase route): step 1/3. In Brucella melitensis biotype 2 (strain ATCC 23457), this protein is 2,3,4,5-tetrahydropyridine-2,6-dicarboxylate N-succinyltransferase.